We begin with the raw amino-acid sequence, 184 residues long: Ribulose bisphosphate carboxylase small subunit, chloroplastic 5 (184 aa).

The N-terminal 43 residues, 1–43 (MAAAMMNKTIVVSKDGCARSSSIPKVATNKMGFASAVAMKKSR), are a transit peptide targeting the chloroplast.

Belongs to the RuBisCO small chain family. In terms of assembly, heterohexadecamer of 8 large and 8 small subunits.

The protein localises to the plastid. It is found in the chloroplast. In terms of biological role, ruBisCO catalyzes two reactions: the carboxylation of D-ribulose 1,5-bisphosphate, the primary event in carbon dioxide fixation, as well as the oxidative fragmentation of the pentose substrate. Both reactions occur simultaneously and in competition at the same active site. Although the small subunit is not catalytic it is essential for maximal activity. The sequence is that of Ribulose bisphosphate carboxylase small subunit, chloroplastic 5 from Acetabularia peniculus (Green alga).